We begin with the raw amino-acid sequence, 1172 residues long: DNA-directed RNA polymerases IV and V subunit 2 (1172 aa).

Position 786 (Asp-786) interacts with Mg(2+). Cys-1108, Cys-1111, Cys-1133, and Cys-1136 together coordinate Zn(2+). The segment at 1108-1136 (CRKCKTYANVIERTPSSGRKIRGPYCRVC) adopts a C4-type zinc-finger fold.

It belongs to the RNA polymerase beta chain family. Component of the RNA polymerase IV and V complexes. Interacts with SSH1, NRPD1 and NRPE1. As to expression, mostly expressed in seedlings, flowers and roots, present ubiquitously, except in sperm cells.

The protein resides in the nucleus. It catalyses the reaction RNA(n) + a ribonucleoside 5'-triphosphate = RNA(n+1) + diphosphate. In terms of biological role, DNA-dependent RNA polymerase catalyzes the transcription of DNA into RNA using the four ribonucleoside triphosphates as substrates. Second largest component of RNA polymerases IV and V which mediate short-interfering RNAs (siRNA) accumulation and subsequent RNA-directed DNA methylation-dependent (RdDM) transcriptional gene silencing (TGS) of endogenous repeated sequences, including transposable elements. Proposed to contribute to the polymerase catalytic activity and forms the polymerase active center together with the largest subunit. Also required for full erasure of methylation when the RNA trigger is withdrawn. Required for intercellular RNA interference (RNAi) leading to systemic post-transcriptional gene silencing. Involved in the maintenance of post-transcriptional RNA silencing. During interphase, mediates siRNA-independent heterochromatin association and methylation into chromocenters and condensation and cytosine methylation at pericentromeric major repeats. Required for complete maintenance of the 35S promoter homology-dependent TGS in transgenic plants and for the initial establishment of DNA methylation. In Arabidopsis thaliana (Mouse-ear cress), this protein is DNA-directed RNA polymerases IV and V subunit 2 (NRPD2).